The sequence spans 1380 residues: Receptor-type adenylate cyclase A (1380 aa).

Topologically, residues 1 to 34 are cytoplasmic; that stretch reads MAMQIRPSLGGCLRHGGAGDHAARRLSRLRAAKV. The chain crosses the membrane as a helical span at residues 35 to 55; it reads FVPTAVVCVLLCCAPWVMAEI. Residues 56 to 891 are Extracellular-facing; the sequence is TNDAEREPVY…SHALTPAQRN (836 aa). Residues Asn422, Asn478, Asn497, and Asn567 are each glycosylated (N-linked (GlcNAc...) asparagine). The chain crosses the membrane as a helical span at residues 892–912; that stretch reads GLIAGCVVGAVVLIATCTLLL. Topologically, residues 913–1380 are cytoplasmic; sequence YCCMDNRNND…NPHYARHAFE (468 aa). In terms of domain architecture, Guanylate cyclase spans 933–1087; it reads TLLFTDIESS…DTSNMAARTE (155 aa). Mg(2+) is bound by residues Asp938 and Asp981. Residues 1270-1298 form a disordered region; that stretch reads LAREGDSAAGGVRPRLPGSPVTSLPAGGS.

The protein belongs to the adenylyl cyclase class-3 family. It depends on Mg(2+) as a cofactor.

Its subcellular location is the membrane. The catalysed reaction is ATP = 3',5'-cyclic AMP + diphosphate. In terms of biological role, could act as a receptor for an unknown ligand. In Leishmania donovani, this protein is Receptor-type adenylate cyclase A (RAC-A).